A 202-amino-acid polypeptide reads, in one-letter code: Hypoxanthine-guanine phosphoribosyltransferase (202 aa).

Positions 66 and 67 each coordinate diphosphate. Positions 122 and 123 each coordinate Mg(2+). D126 functions as the Proton acceptor in the catalytic mechanism. Residues K154, 175 to 176 (FV), and D182 contribute to the GMP site. R188 serves as a coordination point for diphosphate.

The protein belongs to the purine/pyrimidine phosphoribosyltransferase family. Mg(2+) serves as cofactor.

The protein localises to the cytoplasm. The enzyme catalyses IMP + diphosphate = hypoxanthine + 5-phospho-alpha-D-ribose 1-diphosphate. The catalysed reaction is GMP + diphosphate = guanine + 5-phospho-alpha-D-ribose 1-diphosphate. It participates in purine metabolism; IMP biosynthesis via salvage pathway; IMP from hypoxanthine: step 1/1. It functions in the pathway purine metabolism; GMP biosynthesis via salvage pathway; GMP from guanine: step 1/1. Functionally, purine salvage pathway enzyme that catalyzes the transfer of the ribosyl-5-phosphate group from 5-phospho-alpha-D-ribose 1-diphosphate (PRPP) to the N9 position of the 6-oxopurines hypoxanthine and guanine to form the corresponding ribonucleotides IMP (inosine 5'-monophosphate) and GMP (guanosine 5'-monophosphate), with the release of PPi. The sequence is that of Hypoxanthine-guanine phosphoribosyltransferase (hpt) from Mycobacterium tuberculosis (strain CDC 1551 / Oshkosh).